Here is a 369-residue protein sequence, read N- to C-terminus: Beta-1,3-galactosyltransferase 9 (369 aa).

The Cytoplasmic segment spans residues 1–12 (MQVTFCRLRTHQ). Residues 13-33 (WCFILFNVILFHALLFGTDFV) traverse the membrane as a helical; Signal-anchor for type II membrane protein segment. Residues 34–369 (EEYFLHSLPY…IKNNLMYFAD (336 aa)) are Lumenal-facing. N-linked (GlcNAc...) asparagine glycans are attached at residues Asn66, Asn96, and Asn109.

This sequence belongs to the glycosyltransferase 31 family.

Its subcellular location is the golgi apparatus membrane. Functionally, putative glycosyltransferase that could catalyze the transfer of galactose residues from UDP-alpha-D-galactose. This chain is Beta-1,3-galactosyltransferase 9, found in Homo sapiens (Human).